A 256-amino-acid chain; its full sequence is Proteasome subunit alpha (256 aa).

The segment at 226–256 is disordered; that stretch reads LLPSQEESGSTDGEASGDAGDDKKTGDDKKS. Residues 245 to 256 show a composition bias toward basic and acidic residues; that stretch reads GDDKKTGDDKKS.

It belongs to the peptidase T1A family. The 20S proteasome core is composed of 14 alpha and 14 beta subunits that assemble into four stacked heptameric rings, resulting in a barrel-shaped structure. The two inner rings, each composed of seven catalytic beta subunits, are sandwiched by two outer rings, each composed of seven alpha subunits. The catalytic chamber with the active sites is on the inside of the barrel. Has a gated structure, the ends of the cylinder being occluded by the N-termini of the alpha-subunits. Is capped by the proteasome-associated ATPase, ARC.

It is found in the cytoplasm. It participates in protein degradation; proteasomal Pup-dependent pathway. Its activity is regulated as follows. The formation of the proteasomal ATPase ARC-20S proteasome complex, likely via the docking of the C-termini of ARC into the intersubunit pockets in the alpha-rings, may trigger opening of the gate for substrate entry. Interconversion between the open-gate and close-gate conformations leads to a dynamic regulation of the 20S proteasome proteolysis activity. Component of the proteasome core, a large protease complex with broad specificity involved in protein degradation. This chain is Proteasome subunit alpha, found in Saccharopolyspora erythraea (strain ATCC 11635 / DSM 40517 / JCM 4748 / NBRC 13426 / NCIMB 8594 / NRRL 2338).